The following is a 106-amino-acid chain: MTEKMHELKITIFTDKGRSTISGIDFPLPVLPYPAPYTFRLYGYKIEGPNLTNKEFKVKTGKIEYKGEEFDIPPSSKGSWRGVDEEMDLTYVTIYPSRQPKKVFHY.

Belongs to the csb family.

This is an uncharacterized protein from Dictyostelium discoideum (Social amoeba).